The primary structure comprises 187 residues: Putative manganese efflux pump MntP (187 aa).

The next 6 helical transmembrane spans lie at 3–23 (FYSLIFLSCALGMDAFAVSLC), 35–55 (HYLIVGIYFGGFQALMPTIGY), 56–76 (FIGITFASFIASIDHWIAFIL), 107–127 (LALAIATSIDALAVGVSFAFL), 129–149 (VNLLLAIFLIGIITFILCIIA), and 166–186 (LLGGLVLIILGVKILIEHLFF).

It belongs to the MntP (TC 9.B.29) family.

The protein resides in the cell inner membrane. Probably functions as a manganese efflux pump. This Campylobacter jejuni subsp. doylei (strain ATCC BAA-1458 / RM4099 / 269.97) protein is Putative manganese efflux pump MntP.